The following is a 249-amino-acid chain: Probable transcriptional regulatory protein DICTH_1505 (249 aa).

It belongs to the TACO1 family.

Its subcellular location is the cytoplasm. This Dictyoglomus thermophilum (strain ATCC 35947 / DSM 3960 / H-6-12) protein is Probable transcriptional regulatory protein DICTH_1505.